The chain runs to 599 residues: Putative fused cobalt transport protein CbiMQ (599 aa).

Positions 1-239 (MHIMEGFLPS…LLPSSDQNLS (239 aa)) are cbiM. Helical transmembrane passes span 12–32 (WWQF…AALI), 44–64 (LLGL…PSVG), 74–94 (FGAI…VLVF), 106–126 (TLGA…CIIF), 140–160 (SFSV…YMMT), 162–182 (LQLA…FVVY), 183–203 (LGIF…LIVL), 247–267 (IIAG…LAGL), 303–323 (WLFA…LYLL), 356–376 (QVSA…GVTS), 377–397 (PLPY…LIIA), 407–427 (LLTI…LITG), 438–458 (IGAF…LVLS), 463–483 (GMCS…FSVL), 493–513 (IDLS…AIAI), and 579–599 (MAVF…MLLL). The interval 341–599 (DEHILDDVAI…GLLCAEMLLL (259 aa)) is cbiQ.

This sequence in the N-terminal section; belongs to the CbiM family. It in the C-terminal section; belongs to the CbiQ family. As to quaternary structure, forms an energy-coupling factor (ECF) transporter complex composed of an ATP-binding protein (A component, CbiO), a transmembrane protein (T component, CbiQ) and 2 possible substrate-capture proteins (S components, CbiM and CbiN) of unknown stoichimetry.

The protein resides in the cell membrane. Its pathway is cofactor biosynthesis; adenosylcobalamin biosynthesis. Functionally, part of the energy-coupling factor (ECF) transporter complex CbiMNOQ involved in cobalt import. The sequence is that of Putative fused cobalt transport protein CbiMQ (cbiMQ) from Methanocorpusculum labreanum (strain ATCC 43576 / DSM 4855 / Z).